The following is a 142-amino-acid chain: Small heat shock protein IbpB (142 aa).

The region spanning Ala26 to Arg137 is the sHSP domain.

The protein belongs to the small heat shock protein (HSP20) family. Homodimer. Forms homomultimers of about 100-150 subunits at optimal growth temperatures. Conformation changes to oligomers at high temperatures or high ionic concentrations. The decrease in size of the multimers is accompanied by an increase in chaperone activity.

Its subcellular location is the cytoplasm. Its function is as follows. Associates with aggregated proteins, together with IbpA, to stabilize and protect them from irreversible denaturation and extensive proteolysis during heat shock and oxidative stress. Aggregated proteins bound to the IbpAB complex are more efficiently refolded and reactivated by the ATP-dependent chaperone systems ClpB and DnaK/DnaJ/GrpE. Its activity is ATP-independent. The protein is Small heat shock protein IbpB of Shigella flexneri serotype 5b (strain 8401).